The following is a 206-amino-acid chain: Small ribosomal subunit protein uS4 (206 aa).

Basic and acidic residues predominate over residues 25–39; it reads DKLLDRKPNGPGKER. The segment at 25 to 49 is disordered; sequence DKLLDRKPNGPGKERGARKRGKTSV. Residues 95-157 form the S4 RNA-binding domain; that stretch reads QRLDNTIYRM…KGIQNLIRHN (63 aa).

It belongs to the universal ribosomal protein uS4 family. As to quaternary structure, part of the 30S ribosomal subunit. Contacts protein S5. The interaction surface between S4 and S5 is involved in control of translational fidelity.

In terms of biological role, one of the primary rRNA binding proteins, it binds directly to 16S rRNA where it nucleates assembly of the body of the 30S subunit. With S5 and S12 plays an important role in translational accuracy. The sequence is that of Small ribosomal subunit protein uS4 from Treponema denticola (strain ATCC 35405 / DSM 14222 / CIP 103919 / JCM 8153 / KCTC 15104).